Consider the following 517-residue polypeptide: Superoxide-generating NADPH oxidase heavy chain subunit A (517 aa).

Over 1 to 19 the chain is Cytoplasmic; the sequence is MRLPTKEEIQRYWVNEGNK. The helical transmembrane segment at 20 to 40 threads the bilayer; sequence LILVILYTLGNIAAFVYTFVH. Residues 41–62 are Extracellular-facing; that stretch reads YYNSPAFEVVGYGVCFARGCAQ. In terms of domain architecture, Ferric oxidoreductase spans 58-201; it reads RGCAQLLKLN…LFVVFFGLLV (144 aa). A helical transmembrane segment spans residues 63–83; that stretch reads LLKLNCALILVPVLRNLLSFL. Topologically, residues 84–97 are cytoplasmic; the sequence is RGTFLNNYVPFDKN. The helical transmembrane segment at 98–118 threads the bilayer; the sequence is IVFHKLIAWVICFATFGHVMA. 2 residues coordinate heme: H101 and H115. The Extracellular portion of the chain corresponds to 119 to 149; it reads HFNNFRLYQDITPQEYKRILGIDYPNLTPIK. A helical membrane pass occupies residues 150-170; the sequence is YAFATLAGWTGHVVCIVMVLM. Over 171–184 the chain is Cytoplasmic; sequence YTSAVESIRRPMFE. The helical transmembrane segment at 185-205 threads the bilayer; that stretch reads GFWYTHHLFVVFFGLLVVHGL. Residues H190 and H203 each coordinate heme. A topological domain (extracellular) is located at residue H206. The chain crosses the membrane as a helical span at residues 207–227; the sequence is SILEPTSFWKWVIGPCALYIV. Over 228–517 the chain is Cytoplasmic; it reads ERLIRLLRSK…CRFHYNKENF (290 aa). The 121-residue stretch at 229-349 folds into the FAD-binding FR-type domain; sequence RLIRLLRSKK…DGPFGAASEE (121 aa). 283–289 provides a ligand contact to FAD; the sequence is HPFTITS.

As to quaternary structure, composed of a heavy chain and a light chain. It depends on FAD as a cofactor.

The protein localises to the membrane. Its function is as follows. Critical component of the membrane-bound oxidase that generates superoxide. It is the terminal component of a respiratory chain that transfers single electrons from cytoplasmic NADPH across the plasma membrane to molecular oxygen on the exterior. The sequence is that of Superoxide-generating NADPH oxidase heavy chain subunit A (noxA) from Dictyostelium discoideum (Social amoeba).